Here is a 143-residue protein sequence, read N- to C-terminus: Anti-sigma F factor (143 aa).

Belongs to the anti-sigma-factor family.

It carries out the reaction L-seryl-[protein] + ATP = O-phospho-L-seryl-[protein] + ADP + H(+). The enzyme catalyses L-threonyl-[protein] + ATP = O-phospho-L-threonyl-[protein] + ADP + H(+). Binds to sigma F and blocks its ability to form an RNA polymerase holoenzyme (E-sigma F). Phosphorylates SpoIIAA on a serine residue. This phosphorylation may enable SpoIIAA to act as an anti-anti-sigma factor that counteracts SpoIIAB and thus releases sigma F from inhibition. The protein is Anti-sigma F factor of Clostridium beijerinckii (strain ATCC 51743 / NCIMB 8052) (Clostridium acetobutylicum).